Consider the following 61-residue polypeptide: MARKAMIEKWKKTPKYSTRAYTRCRICGRPHSVLKKYGICRICFRELAYRGQIPGCKKASW.

Cys-24, Cys-27, Cys-40, and Cys-43 together coordinate Zn(2+).

This sequence belongs to the universal ribosomal protein uS14 family. Zinc-binding uS14 subfamily. In terms of assembly, part of the 30S ribosomal subunit. Contacts proteins S3 and S10. Zn(2+) serves as cofactor.

Its function is as follows. Binds 16S rRNA, required for the assembly of 30S particles and may also be responsible for determining the conformation of the 16S rRNA at the A site. The chain is Small ribosomal subunit protein uS14 from Clostridium novyi (strain NT).